A 277-amino-acid chain; its full sequence is 3-methyl-2-oxobutanoate hydroxymethyltransferase (277 aa).

D43 and D82 together coordinate Mg(2+). Residues 43-44 (DS), D82, and K112 each bind 3-methyl-2-oxobutanoate. E114 contributes to the Mg(2+) binding site. The active-site Proton acceptor is the E181.

The protein belongs to the PanB family. In terms of assembly, homodecamer; pentamer of dimers. It depends on Mg(2+) as a cofactor.

It localises to the cytoplasm. The enzyme catalyses 3-methyl-2-oxobutanoate + (6R)-5,10-methylene-5,6,7,8-tetrahydrofolate + H2O = 2-dehydropantoate + (6S)-5,6,7,8-tetrahydrofolate. It functions in the pathway cofactor biosynthesis; (R)-pantothenate biosynthesis; (R)-pantoate from 3-methyl-2-oxobutanoate: step 1/2. In terms of biological role, catalyzes the reversible reaction in which hydroxymethyl group from 5,10-methylenetetrahydrofolate is transferred onto alpha-ketoisovalerate to form ketopantoate. This Bacillus velezensis (strain DSM 23117 / BGSC 10A6 / LMG 26770 / FZB42) (Bacillus amyloliquefaciens subsp. plantarum) protein is 3-methyl-2-oxobutanoate hydroxymethyltransferase.